Consider the following 199-residue polypeptide: Protein Thf1 (199 aa).

Residues 167-198 adopt a coiled-coil conformation; the sequence is QYSRVEKDISMYKSNIEKMKQALEIIALNLKT.

Belongs to the THF1 family.

May be involved in photosynthetic membrane biogenesis. The protein is Protein Thf1 of Prochlorococcus marinus (strain NATL1A).